Consider the following 508-residue polypeptide: O-acetyltransferase pigM (508 aa).

The tract at residues 166–188 is disordered; sequence TPAPDERGKISPSLEDAAGSPRT.

It functions in the pathway secondary metabolite biosynthesis. Functionally, O-acetyltransferase; part of the gene cluster that mediates the biosynthesis of azaphilone pigments (MonAzPs), a complex mixture of compounds with a common azaphilone skeleton very widely used as food colorants. PigM and pigO are involved in the elimination of the omega-1 alcohol with pigM acting as an O-acetyltransferase that synthesizes the O-11 acetyl intermediate whereas pigO eliminates acetic acid to yield an intermediate with a C10(11) double bond. The first step of the pathway is performed by the nrPKS pigA that forms the hexaketide precursor from successive condensations of five malonyl-CoA units, with a simple acetyl-CoA starter unit. The role of esterase pigG is not clear, but it may play at most a supplementary role in the formation of the benzaldehyde produced by the pigA nrPKS. This very reactive benzaldehyde is intercepted by the pigC ketoreductase that to provide the first stable enzyme-free MonAzPs intermediate, 6-(4-hydroxy-2-oxopentyl)-3-methyl-2,4-dioxocyclohexane carbaldehyde, also known as M7PKS-1. The FAD-dependent monooxygenase pigN hydroxylates M7PKS-1 at C-4, which triggers the formation of the pyran ring. PigJ, pigK and pigD are involved in the acetylation of the pyran ring. PigJ and pigK form the two subunits of a dedicated fungal FAS that produces the side chain fatty acyl moiety of MonAzPs and pigD transfers the fatty acyl chain to the C-4 alcohol. PigM and pigO are involved in the elimination of the omega-1 alcohol. PigM acts as an O-acetyltransferase that synthesizes the putative O-11 acetyl intermediate whereas pigO eliminates acetic acid to yield an intermediate with a C10(11) double bond. The dehydration of the C-11 alcohol followed by the reduction of the C6(7) double bond by the NAD(P)H-dependent oxidoreductase pigE increases the electrophilicity of the C-5 ketone of the resulting acyl benzopyran. This in turn sets up the C-5 ketone for an intramolecular Knoevenagel aldol condensation with the C-20 enol of the side chain. This condensation affords the characteristic linear tricyclic carbon skeletons of the yellow pigments that serve as the common precursors for the classical yellow pigments monascin and ankaflavin, orange pigments rubopunctatin and monascorubrin, and red pigments ribropunctamine and monascorubramine. The FAD-dependent oxidoreductase pigF is especially invoved in the biosynthesis of orange and red pigments via desaturation of C6(7). This Monascus ruber (Mold) protein is O-acetyltransferase pigM.